Consider the following 214-residue polypeptide: Glutathione S-transferase F11 (214 aa).

Positions 2–82 (VVKVYGQIKA…YYATKYADQG (81 aa)) constitute a GST N-terminal domain. Residues 11–12 (AA), 40–41 (QK), 53–54 (QV), and 66–67 (ES) each bind glutathione. In terms of domain architecture, GST C-terminal spans 89 to 214 (TLEGRAIVDQ…WKKLMELAAY (126 aa)).

Belongs to the GST superfamily. Phi family.

It localises to the cytoplasm. Its subcellular location is the cytosol. It catalyses the reaction RX + glutathione = an S-substituted glutathione + a halide anion + H(+). Functionally, may be involved in the conjugation of reduced glutathione to a wide number of exogenous and endogenous hydrophobic electrophiles and have a detoxification role against certain herbicides. The chain is Glutathione S-transferase F11 from Arabidopsis thaliana (Mouse-ear cress).